The following is a 404-amino-acid chain: Multidrug resistance protein MdtG (404 aa).

The next 11 helical transmembrane spans lie at 19–39 (LGCFLTGAAFSLVMPFLPLYV), 56–76 (LVFSITFLFSAIASPFWGGLA), 90–110 (LGMAIVMLLMGMAQNIWQFLI), 113–133 (ALLGLLGGFIPNANALIATQV), 144–164 (TLSTGGVSGALLGPLAGGLLA), 171–191 (PVFFITASVLFICFLLTFFFI), 222–242 (LFVTTLIIQVATGSIAPILTL), 254–274 (IAFISGMIASVPGVAALLSAP), 288–308 (ILIVALIISVLLLIPMSFVQT), 317–337 (FLLGAADGALLPAVQTLLVYN), and 376–396 (AVFCVTAGVVLFNAIYSWNSL).

This sequence belongs to the major facilitator superfamily. DHA1 family. MdtG (TC 2.A.1.2.20) subfamily.

It localises to the cell inner membrane. This chain is Multidrug resistance protein MdtG, found in Salmonella typhimurium (strain LT2 / SGSC1412 / ATCC 700720).